Reading from the N-terminus, the 231-residue chain is Ion-translocating oxidoreductase complex subunit E (231 aa).

The next 6 membrane-spanning stretches (helical) occupy residues 18 to 38, 39 to 59, 63 to 83, 86 to 106, 125 to 145, and 182 to 202; these read ALVQLLGLCPLLAVTSTATNA, LGLGLATTLVLTLTNLTISTL, TPAEIRIPIYVMIIASVVSAV, LINAYAFGLYQSLGIFIPLIV, ALSALDGFSIGMGATCAMFVL, and PFLLAMLPPGAFIGLGLMLAG.

Belongs to the NqrDE/RnfAE family. The complex is composed of six subunits: RsxA, RsxB, RsxC, RsxD, RsxE and RsxG.

It localises to the cell inner membrane. Its function is as follows. Part of a membrane-bound complex that couples electron transfer with translocation of ions across the membrane. Required to maintain the reduced state of SoxR. The protein is Ion-translocating oxidoreductase complex subunit E of Escherichia coli (strain SE11).